We begin with the raw amino-acid sequence, 208 residues long: dITP/XTP pyrophosphatase (208 aa).

15 to 20 (SHNAGK) lines the substrate pocket. Glutamate 47 and aspartate 76 together coordinate Mg(2+). Residue aspartate 76 is the Proton acceptor of the active site. Residues serine 77, 157 to 160 (HGYD), lysine 180, and 185 to 186 (HR) each bind substrate.

This sequence belongs to the HAM1 NTPase family. As to quaternary structure, homodimer. Mg(2+) serves as cofactor.

The catalysed reaction is XTP + H2O = XMP + diphosphate + H(+). It carries out the reaction dITP + H2O = dIMP + diphosphate + H(+). It catalyses the reaction ITP + H2O = IMP + diphosphate + H(+). Pyrophosphatase that catalyzes the hydrolysis of nucleoside triphosphates to their monophosphate derivatives, with a high preference for the non-canonical purine nucleotides XTP (xanthosine triphosphate), dITP (deoxyinosine triphosphate) and ITP. Seems to function as a house-cleaning enzyme that removes non-canonical purine nucleotides from the nucleotide pool, thus preventing their incorporation into DNA/RNA and avoiding chromosomal lesions. The chain is dITP/XTP pyrophosphatase from Gluconobacter oxydans (strain 621H) (Gluconobacter suboxydans).